The chain runs to 177 residues: Large ribosomal subunit protein uL6 (177 aa).

This sequence belongs to the universal ribosomal protein uL6 family. Part of the 50S ribosomal subunit.

Its function is as follows. This protein binds to the 23S rRNA, and is important in its secondary structure. It is located near the subunit interface in the base of the L7/L12 stalk, and near the tRNA binding site of the peptidyltransferase center. This is Large ribosomal subunit protein uL6 from Pseudomonas syringae pv. syringae (strain B728a).